The chain runs to 142 residues: Relaxin-3 (142 aa).

A signal peptide spans Met1–Ala25. Cystine bridges form between Cys35–Cys129, Cys47–Cys142, and Cys128–Cys133. Residues Ser55–Arg118 constitute a propeptide, connecting peptide.

This sequence belongs to the insulin family. As to quaternary structure, heterodimer of a B chain and an A chain linked by two disulfide bonds.

The protein resides in the secreted. Its function is as follows. May play a role in neuropeptide signaling processes. Ligand for LGR7, RXFP3 and RXFP4. This is Relaxin-3 (RLN3) from Homo sapiens (Human).